The primary structure comprises 370 residues: DNA replication and repair protein RecF (370 aa).

Residue 30 to 37 (GENAQGKT) coordinates ATP.

This sequence belongs to the RecF family.

It is found in the cytoplasm. In terms of biological role, the RecF protein is involved in DNA metabolism; it is required for DNA replication and normal SOS inducibility. RecF binds preferentially to single-stranded, linear DNA. It also seems to bind ATP. This chain is DNA replication and repair protein RecF, found in Listeria welshimeri serovar 6b (strain ATCC 35897 / DSM 20650 / CCUG 15529 / CIP 8149 / NCTC 11857 / SLCC 5334 / V8).